A 431-amino-acid chain; its full sequence is Histidinol dehydrogenase (431 aa).

Residues Tyr-131, Gln-193, and Asn-216 each coordinate NAD(+). Positions 239, 261, and 264 each coordinate substrate. Positions 261 and 264 each coordinate Zn(2+). Catalysis depends on proton acceptor residues Glu-329 and His-330. Positions 330, 363, 417, and 422 each coordinate substrate. Residue Asp-363 coordinates Zn(2+). His-422 lines the Zn(2+) pocket.

Belongs to the histidinol dehydrogenase family. The cofactor is Zn(2+).

The catalysed reaction is L-histidinol + 2 NAD(+) + H2O = L-histidine + 2 NADH + 3 H(+). It functions in the pathway amino-acid biosynthesis; L-histidine biosynthesis; L-histidine from 5-phospho-alpha-D-ribose 1-diphosphate: step 9/9. In terms of biological role, catalyzes the sequential NAD-dependent oxidations of L-histidinol to L-histidinaldehyde and then to L-histidine. This Clostridium acetobutylicum (strain ATCC 824 / DSM 792 / JCM 1419 / IAM 19013 / LMG 5710 / NBRC 13948 / NRRL B-527 / VKM B-1787 / 2291 / W) protein is Histidinol dehydrogenase.